We begin with the raw amino-acid sequence, 495 residues long: Cytochrome P450 monooxygenase 113 (495 aa).

The helical transmembrane segment at 2–22 (FLQIAACFTVIGLLYGLVSNL) threads the bilayer. C428 lines the heme pocket.

The protein belongs to the cytochrome P450 family. Requires heme as cofactor.

It is found in the membrane. Its pathway is secondary metabolite biosynthesis. Cytochrome P450 monooxygenase that is able to use 4-ethoxybenzoic acid as a substrate for oxidation. The polypeptide is Cytochrome P450 monooxygenase 113 (Postia placenta (strain ATCC 44394 / Madison 698-R) (Brown rot fungus)).